A 213-amino-acid polypeptide reads, in one-letter code: Small ribosomal subunit protein uS3 (213 aa).

One can recognise a KH type-2 domain in the interval 38-106; it reads IRAFVKKLLY…EFSLEVNEIR (69 aa).

It belongs to the universal ribosomal protein uS3 family. In terms of assembly, part of the 30S ribosomal subunit. Forms a tight complex with proteins S10 and S14.

In terms of biological role, binds the lower part of the 30S subunit head. Binds mRNA in the 70S ribosome, positioning it for translation. This is Small ribosomal subunit protein uS3 from Desulfovibrio desulfuricans (strain ATCC 27774 / DSM 6949 / MB).